Here is a 428-residue protein sequence, read N- to C-terminus: Probable protein phosphatase 2C 5 (428 aa).

The region spanning 25–297 (RSEKVEKPFV…DDTTCVVVDI (273 aa)) is the PPM-type phosphatase domain. Residues D73, G74, D249, and D288 each coordinate Mn(2+).

It belongs to the PP2C family. The cofactor is Mg(2+). It depends on Mn(2+) as a cofactor.

The enzyme catalyses O-phospho-L-seryl-[protein] + H2O = L-seryl-[protein] + phosphate. It catalyses the reaction O-phospho-L-threonyl-[protein] + H2O = L-threonyl-[protein] + phosphate. The sequence is that of Probable protein phosphatase 2C 5 from Arabidopsis thaliana (Mouse-ear cress).